Here is a 237-residue protein sequence, read N- to C-terminus: DNA repair protein RecO (237 aa).

This sequence belongs to the RecO family.

Involved in DNA repair and RecF pathway recombination. In Flavobacterium johnsoniae (strain ATCC 17061 / DSM 2064 / JCM 8514 / BCRC 14874 / CCUG 350202 / NBRC 14942 / NCIMB 11054 / UW101) (Cytophaga johnsonae), this protein is DNA repair protein RecO.